Consider the following 461-residue polypeptide: Cysteine--tRNA ligase (461 aa).

Cys30 serves as a coordination point for Zn(2+). Positions 32–42 (VTIYDLCHIGH) match the 'HIGH' region motif. Zn(2+)-binding residues include Cys211, His236, and Glu240. The 'KMSKS' region motif lies at 268 to 272 (KMSKS). Lys271 provides a ligand contact to ATP.

The protein belongs to the class-I aminoacyl-tRNA synthetase family. In terms of assembly, monomer. Requires Zn(2+) as cofactor.

The protein localises to the cytoplasm. The catalysed reaction is tRNA(Cys) + L-cysteine + ATP = L-cysteinyl-tRNA(Cys) + AMP + diphosphate. The protein is Cysteine--tRNA ligase of Shewanella sp. (strain W3-18-1).